A 427-amino-acid chain; its full sequence is Serine--tRNA ligase (427 aa).

231-233 (TAE) contributes to the L-serine binding site. 262–264 (RSE) is a binding site for ATP. E285 contributes to the L-serine binding site. Position 349–352 (349–352 (EISS)) interacts with ATP. S385 serves as a coordination point for L-serine.

Belongs to the class-II aminoacyl-tRNA synthetase family. Type-1 seryl-tRNA synthetase subfamily. Homodimer. The tRNA molecule binds across the dimer.

It is found in the cytoplasm. The enzyme catalyses tRNA(Ser) + L-serine + ATP = L-seryl-tRNA(Ser) + AMP + diphosphate + H(+). It catalyses the reaction tRNA(Sec) + L-serine + ATP = L-seryl-tRNA(Sec) + AMP + diphosphate + H(+). The protein operates within aminoacyl-tRNA biosynthesis; selenocysteinyl-tRNA(Sec) biosynthesis; L-seryl-tRNA(Sec) from L-serine and tRNA(Sec): step 1/1. In terms of biological role, catalyzes the attachment of serine to tRNA(Ser). Is also able to aminoacylate tRNA(Sec) with serine, to form the misacylated tRNA L-seryl-tRNA(Sec), which will be further converted into selenocysteinyl-tRNA(Sec). This chain is Serine--tRNA ligase, found in Sinorhizobium medicae (strain WSM419) (Ensifer medicae).